We begin with the raw amino-acid sequence, 921 residues long: Probable dipeptidyl-aminopeptidase B (921 aa).

The interval 1 to 33 is disordered; it reads MAGHTEENAQLLSTEQESVSRHSSDSAASTAST. At 1–109 the chain is on the cytoplasmic side; sequence MAGHTEENAQ…NKSVDKKLRK (109 aa). Residues 8 to 17 show a composition bias toward polar residues; it reads NAQLLSTEQE. A helical; Signal-anchor for type II membrane protein transmembrane segment spans residues 110–130; sequence LIWIVGGVFIGAWVLALFIFL. Over 131 to 921 the chain is Vacuolar; sequence GKQAYKHSSE…VPLQIDAAKV (791 aa). N-linked (GlcNAc...) asparagine glycosylation is present at Asn-362. Ser-768 functions as the Charge relay system in the catalytic mechanism. Residue Asn-822 is glycosylated (N-linked (GlcNAc...) asparagine). Catalysis depends on charge relay system residues Asp-845 and His-878.

Belongs to the peptidase S9B family.

The protein resides in the vacuole membrane. It catalyses the reaction Release of an N-terminal dipeptide, Xaa-Yaa-|-Zaa-, from a polypeptide, preferentially when Yaa is Pro, provided Zaa is neither Pro nor hydroxyproline.. Type IV dipeptidyl-peptidase which removes N-terminal dipeptides sequentially from polypeptides having unsubstituted N-termini provided that the penultimate residue is proline. The protein is Probable dipeptidyl-aminopeptidase B (dapB) of Sclerotinia sclerotiorum (strain ATCC 18683 / 1980 / Ss-1) (White mold).